Consider the following 154-residue polypeptide: Histidine-containing phosphotransfer protein 1 (154 aa).

Methionine 1 is modified (N-acetylmethionine). The region spanning 38 to 143 (NPDFVSQVVT…FKLEQQIVAS (106 aa)) is the HPt domain. The residue at position 79 (histidine 79) is a Phosphohistidine.

As to quaternary structure, interacts with the B-type response regulators ARR1, ARR2, ARR4 and ARR9. Binds to ETR1, AHK2, AHK3, AHK4, AHK5 and FBR12. Post-translationally, two-component system major event consists of a His-to-Asp phosphorelay between a sensor histidine kinase (HK) and a response regulator (RR). In plants, the His-to-Asp phosphorelay involves an additional intermediate named Histidine-containing phosphotransfer protein (HPt). This multistep phosphorelay consists of a His-Asp-His-Asp sequential transfer of a phosphate group between first a His and an Asp of the HK protein, followed by the transfer to a conserved His of the HPt protein and finally the transfer to an Asp in the receiver domain of the RR protein. In terms of tissue distribution, strongly expressed in roots.

Its subcellular location is the cytoplasm. It is found in the cytosol. It localises to the nucleus. Its function is as follows. Functions as a two-component phosphorelay mediators between cytokinin sensor histidine kinases and response regulator (B-type ARRs). Plays an important role in propagating cytokinin signal transduction through the multistep His-to-Asp phosphorelay. The protein is Histidine-containing phosphotransfer protein 1 (AHP1) of Arabidopsis thaliana (Mouse-ear cress).